Consider the following 91-residue polypeptide: Large ribosomal subunit protein bL31B (91 aa).

Belongs to the bacterial ribosomal protein bL31 family. Type B subfamily. Part of the 50S ribosomal subunit.

This Neisseria meningitidis serogroup B (strain ATCC BAA-335 / MC58) protein is Large ribosomal subunit protein bL31B.